A 435-amino-acid polypeptide reads, in one-letter code: MTYFKQIEKINYEGVQSGNRFAFRHYNPEEVVLGKSMKEHLRFAVAYWHTMTQDGSDPFGAATNVRDVSGKTEMELARNRVEMFFEILEKLGVEYFCFHDVDIAPEGNSLQEFMRNLDEITDLIQDKMKQTGIKLLWNTANLFTHPRFLNGAASTNNADVYAFSAAQIKKGLDISKKLGGKNYVFWGGREGYESLLNTDMEFEQANMARMYKMAIRYANEIEHEVQFLIEPKPKEPTKHQYDFDAATTMAFLQKYGLENDFKLNLEANHATLAGHTFEHELNVARTYNALGSIDANQGDLLLGWDTDEFPTNIYDTTLTMYEILQNGGIAPGGINFDAKVRRTSFEMEDLLLAHIAGMDTYARGLKAAAKLTEDHFFDKIKEERYRSFKKGIGARILDNQEDFKSLTEYALAHDSIQNESSHIEYVKSRLNDYLV.

Active-site residues include His99 and Asp102. The Mg(2+) site is built by Glu230, Glu266, His269, Asp294, Asp305, Asp307, and Asp337.

The protein belongs to the xylose isomerase family. In terms of assembly, homotetramer. Mg(2+) serves as cofactor.

The protein resides in the cytoplasm. The catalysed reaction is alpha-D-xylose = alpha-D-xylulofuranose. This Listeria welshimeri serovar 6b (strain ATCC 35897 / DSM 20650 / CCUG 15529 / CIP 8149 / NCTC 11857 / SLCC 5334 / V8) protein is Xylose isomerase.